The following is a 120-amino-acid chain: Nitrogen regulatory protein GlnK3 (120 aa).

ADP-binding positions include Thr40 and 48–50 (GEQ). ATP is bound by residues Thr40 and 48-50 (GEQ). Residues 48–52 (GEQKG) and Lys69 each bind 2-oxoglutarate. ADP contacts are provided by residues Val75 and 98–101 (GDGR). ATP contacts are provided by residues Val75 and 98–101 (GDGR). Gly98 provides a ligand contact to 2-oxoglutarate.

It belongs to the P(II) protein family. As to quaternary structure, homotrimer. Interacts and forms a complex with Amt3.

It is found in the cytoplasm. Activity is influenced by intracellular pools of the effector molecules ATP, ADP and 2-oxoglutarate. It senses the cellular nitrogen status through 2-oxoglutarate, and the energy level of the cell by binding both ATP and ADP with different affinities. ATP and 2-oxoglutarate prohibit binding to Amt3. ADP promotes the complex formation. In terms of biological role, involved in the regulation of nitrogen metabolism. Regulates the activity of its targets by protein-protein interaction in response to the nitrogen status of the cell. Regulates the activity of the ammonia channel Amt3 via direct interaction. This chain is Nitrogen regulatory protein GlnK3, found in Archaeoglobus fulgidus (strain ATCC 49558 / DSM 4304 / JCM 9628 / NBRC 100126 / VC-16).